Consider the following 398-residue polypeptide: Beta-1,4-galactosyltransferase 1 (398 aa).

Over 1–24 (MRLREPLLSGSAAMPGASLQRACR) the chain is Cytoplasmic. The chain crosses the membrane as a helical; Signal-anchor for type II membrane protein span at residues 25 to 44 (LLVAVCALHLGVTLVYYLAG). Over 45–398 (RDLSRLPQLV…QITVDIGTPS (354 aa)) the chain is Lumenal. Over residues 61-76 (QGGSNSAAAIGQSSGE) the composition is skewed to polar residues. The disordered stretch occupies residues 61-117 (QGGSNSAAAIGQSSGELRTGGARPPPPLGASSQPRPGGDSSPVVDSGPGPASNLTSV). Residue Asn113 is glycosylated (N-linked (GlcNAc...) asparagine). A disulfide bridge links Cys130 with Cys172. Residues 183 to 187 (PFRNR), 222 to 224 (FNR), 249 to 250 (VD), and Trp310 each bind UDP-alpha-D-galactose. Residues Cys243 and Cys262 are joined by a disulfide bond. Position 250 (Asp250) interacts with Mn(2+). 312–315 (GEDD) contributes to the N-acetyl-D-glucosamine binding site. His343 is a binding site for Mn(2+). 343–346 (HSRD) is a UDP-alpha-D-galactose binding site. N-acetyl-D-glucosamine is bound at residue Arg355.

The protein belongs to the glycosyltransferase 7 family. As to quaternary structure, homodimer; and heterodimer with alpha-lactalbumin to form lactose synthase. Interacts (via N-terminal cytoplasmic domain) with UBE2Q1 (via N-terminus); the interaction is direct. The cofactor is Mn(2+). In terms of processing, the soluble form derives from the membrane forms by proteolytic processing. Ubiquitously expressed, but at very low levels in fetal and adult brain.

Its subcellular location is the golgi apparatus. It is found in the golgi stack membrane. It localises to the cell membrane. The protein resides in the cell surface. The protein localises to the cell projection. Its subcellular location is the filopodium. It is found in the secreted. The enzyme catalyses D-glucose + UDP-alpha-D-galactose = lactose + UDP + H(+). It catalyses the reaction an N-acetyl-beta-D-glucosaminyl derivative + UDP-alpha-D-galactose = a beta-D-galactosyl-(1-&gt;4)-N-acetyl-beta-D-glucosaminyl derivative + UDP + H(+). The catalysed reaction is N-acetyl-D-glucosamine + UDP-alpha-D-galactose = beta-D-galactosyl-(1-&gt;4)-N-acetyl-D-glucosamine + UDP + H(+). It carries out the reaction a beta-D-GlcNAc-(1-&gt;3)-beta-D-Gal-(1-&gt;4)-beta-D-Glc-(1&lt;-&gt;1)-Cer(d18:1(4E)) + UDP-alpha-D-galactose = a neolactoside nLc4Cer(d18:1(4E)) + UDP + H(+). The enzyme catalyses a beta-D-glucosylceramide + UDP-alpha-D-galactose = a beta-D-galactosyl-(1-&gt;4)-beta-D-glucosyl-(1&lt;-&gt;1)-ceramide + UDP + H(+). It catalyses the reaction a neolactoside IV(3)-beta-GlcNAc-nLc4Cer + UDP-alpha-D-galactose = a neolactoside nLc6Cer + UDP + H(+). Its pathway is protein modification; protein glycosylation. In terms of biological role, the Golgi complex form catalyzes the production of lactose in the lactating mammary gland and could also be responsible for the synthesis of complex-type N-linked oligosaccharides in many glycoproteins as well as the carbohydrate moieties of glycolipids. Functionally, the cell surface form functions as a recognition molecule during a variety of cell to cell and cell to matrix interactions, as those occurring during development and egg fertilization, by binding to specific oligosaccharide ligands on opposing cells or in the extracellular matrix. The chain is Beta-1,4-galactosyltransferase 1 from Homo sapiens (Human).